A 372-amino-acid chain; its full sequence is NAD(P)H-quinone oxidoreductase subunit 1 (372 aa).

The next 8 membrane-spanning stretches (helical) occupy residues 27 to 47 (IIWL…GVLV), 97 to 117 (ILFT…WLIV), 128 to 148 (VGIG…GLLM), 176 to 196 (LALS…IDIV), 204 to 224 (ILSW…ICAL), 266 to 286 (ILSA…PIPV), 308 to 328 (SIGI…AILL), and 347 to 367 (FLLP…LAFP).

It belongs to the complex I subunit 1 family. In terms of assembly, NDH-1 is composed of at least 11 different subunits.

The protein resides in the cellular thylakoid membrane. It catalyses the reaction a plastoquinone + NADH + (n+1) H(+)(in) = a plastoquinol + NAD(+) + n H(+)(out). The enzyme catalyses a plastoquinone + NADPH + (n+1) H(+)(in) = a plastoquinol + NADP(+) + n H(+)(out). In terms of biological role, NDH-1 shuttles electrons from an unknown electron donor, via FMN and iron-sulfur (Fe-S) centers, to quinones in the respiratory and/or the photosynthetic chain. The immediate electron acceptor for the enzyme in this species is believed to be plastoquinone. Couples the redox reaction to proton translocation, and thus conserves the redox energy in a proton gradient. This chain is NAD(P)H-quinone oxidoreductase subunit 1, found in Prochlorococcus marinus (strain MIT 9301).